A 76-amino-acid polypeptide reads, in one-letter code: Protein CASC2, isoforms 1/2 (76 aa).

Residues 1-20 (MAGTRGLMLLGPGPVAGPRD) are disordered.

This is Protein CASC2, isoforms 1/2 (CASC2) from Homo sapiens (Human).